A 589-amino-acid chain; its full sequence is Aspartate--tRNA ligase (589 aa).

Position 175 (glutamate 175) interacts with L-aspartate. The interval 199–202 (QLFK) is aspartate. Arginine 221 serves as a coordination point for L-aspartate. Residues 221–223 (RDE) and glutamine 230 each bind ATP. L-aspartate is bound at residue histidine 449. Glutamate 483 is a binding site for ATP. Position 490 (arginine 490) interacts with L-aspartate. 535-538 (GLDR) contributes to the ATP binding site.

This sequence belongs to the class-II aminoacyl-tRNA synthetase family. Type 1 subfamily. Homodimer.

The protein localises to the cytoplasm. It carries out the reaction tRNA(Asp) + L-aspartate + ATP = L-aspartyl-tRNA(Asp) + AMP + diphosphate. Its function is as follows. Catalyzes the attachment of L-aspartate to tRNA(Asp) in a two-step reaction: L-aspartate is first activated by ATP to form Asp-AMP and then transferred to the acceptor end of tRNA(Asp). This is Aspartate--tRNA ligase from Lysinibacillus sphaericus (strain C3-41).